The following is a 401-amino-acid chain: Probable tRNA sulfurtransferase (401 aa).

The THUMP domain occupies 60–165; that stretch reads EPISEQLKGV…EQATYITFKD (106 aa). ATP contacts are provided by residues 183–184, 208–209, arginine 265, glycine 287, and glutamine 296; these read ML and HF.

The protein belongs to the ThiI family.

It localises to the cytoplasm. The enzyme catalyses [ThiI sulfur-carrier protein]-S-sulfanyl-L-cysteine + a uridine in tRNA + 2 reduced [2Fe-2S]-[ferredoxin] + ATP + H(+) = [ThiI sulfur-carrier protein]-L-cysteine + a 4-thiouridine in tRNA + 2 oxidized [2Fe-2S]-[ferredoxin] + AMP + diphosphate. It catalyses the reaction [ThiS sulfur-carrier protein]-C-terminal Gly-Gly-AMP + S-sulfanyl-L-cysteinyl-[cysteine desulfurase] + AH2 = [ThiS sulfur-carrier protein]-C-terminal-Gly-aminoethanethioate + L-cysteinyl-[cysteine desulfurase] + A + AMP + 2 H(+). The protein operates within cofactor biosynthesis; thiamine diphosphate biosynthesis. Catalyzes the ATP-dependent transfer of a sulfur to tRNA to produce 4-thiouridine in position 8 of tRNAs, which functions as a near-UV photosensor. Also catalyzes the transfer of sulfur to the sulfur carrier protein ThiS, forming ThiS-thiocarboxylate. This is a step in the synthesis of thiazole, in the thiamine biosynthesis pathway. The sulfur is donated as persulfide by IscS. This chain is Probable tRNA sulfurtransferase, found in Bacillus pumilus (strain SAFR-032).